The sequence spans 158 residues: NAD(P)H-quinone oxidoreductase subunit J, chloroplastic (158 aa).

The protein belongs to the complex I 30 kDa subunit family. In terms of assembly, NDH is composed of at least 16 different subunits, 5 of which are encoded in the nucleus.

The protein resides in the plastid. It is found in the chloroplast thylakoid membrane. The enzyme catalyses a plastoquinone + NADH + (n+1) H(+)(in) = a plastoquinol + NAD(+) + n H(+)(out). The catalysed reaction is a plastoquinone + NADPH + (n+1) H(+)(in) = a plastoquinol + NADP(+) + n H(+)(out). NDH shuttles electrons from NAD(P)H:plastoquinone, via FMN and iron-sulfur (Fe-S) centers, to quinones in the photosynthetic chain and possibly in a chloroplast respiratory chain. The immediate electron acceptor for the enzyme in this species is believed to be plastoquinone. Couples the redox reaction to proton translocation, and thus conserves the redox energy in a proton gradient. The polypeptide is NAD(P)H-quinone oxidoreductase subunit J, chloroplastic (Nicotiana tabacum (Common tobacco)).